Reading from the N-terminus, the 943-residue chain is Translation initiation factor IF-2 (943 aa).

Residues 99–113 (VKAAQTQAAPVQPEQ) show a composition bias toward low complexity. The disordered stretch occupies residues 99-354 (VKAAQTQAAP…LEPNQHAFQA (256 aa)). The segment covering 117-141 (DAVKARAEAAARAEARAKAEAEAAK) has biased composition (basic and acidic residues). Positions 145-172 (AKAGNKAKPAAQKPTEAKAETAPVAAET) are enriched in low complexity. Residues 173–197 (KPAEPKEKAVKPKHERNGKGKDAKK) show a composition bias toward basic and acidic residues. The span at 200-215 (KPAAPAVPQPVVSAEE) shows a compositional bias: low complexity. Basic and acidic residues predominate over residues 216–250 (QAQRDEEARRAAALRAHQEALLKEKQERQARREAM). A compositionally biased stretch (low complexity) spans 251–264 (KQQAEQQAKAAQEA). Composition is skewed to basic and acidic residues over residues 295–308 (AKKEDRRNRDDEGQ) and 319–335 (GGRDRNNARNGGDERVR). The region spanning 443–612 (PRPPVVTVMG…LLEAEVLELT (170 aa)) is the tr-type G domain. Residues 452–459 (GHVDHGKT) are G1. 452–459 (GHVDHGKT) contacts GTP. The G2 stretch occupies residues 477–481 (GITQH). The interval 498-501 (DTPG) is G3. Residues 498–502 (DTPGH) and 552–555 (NKID) each bind GTP. The interval 552–555 (NKID) is G4. The segment at 588 to 590 (SAK) is G5.

The protein belongs to the TRAFAC class translation factor GTPase superfamily. Classic translation factor GTPase family. IF-2 subfamily.

The protein resides in the cytoplasm. In terms of biological role, one of the essential components for the initiation of protein synthesis. Protects formylmethionyl-tRNA from spontaneous hydrolysis and promotes its binding to the 30S ribosomal subunits. Also involved in the hydrolysis of GTP during the formation of the 70S ribosomal complex. This Neisseria gonorrhoeae (strain NCCP11945) protein is Translation initiation factor IF-2.